The following is a 232-amino-acid chain: 5'-methylthioadenosine/S-adenosylhomocysteine nucleosidase (232 aa).

Glu-12 (proton acceptor) is an active-site residue. Substrate contacts are provided by residues Gly-78, Ile-152, and 173-174 (ME). Asp-197 serves as the catalytic Proton donor.

Belongs to the PNP/UDP phosphorylase family. MtnN subfamily. As to quaternary structure, homodimer.

It carries out the reaction S-adenosyl-L-homocysteine + H2O = S-(5-deoxy-D-ribos-5-yl)-L-homocysteine + adenine. The catalysed reaction is S-methyl-5'-thioadenosine + H2O = 5-(methylsulfanyl)-D-ribose + adenine. It catalyses the reaction 5'-deoxyadenosine + H2O = 5-deoxy-D-ribose + adenine. It functions in the pathway amino-acid biosynthesis; L-methionine biosynthesis via salvage pathway; S-methyl-5-thio-alpha-D-ribose 1-phosphate from S-methyl-5'-thioadenosine (hydrolase route): step 1/2. In terms of biological role, catalyzes the irreversible cleavage of the glycosidic bond in both 5'-methylthioadenosine (MTA) and S-adenosylhomocysteine (SAH/AdoHcy) to adenine and the corresponding thioribose, 5'-methylthioribose and S-ribosylhomocysteine, respectively. Also cleaves 5'-deoxyadenosine, a toxic by-product of radical S-adenosylmethionine (SAM) enzymes, into 5-deoxyribose and adenine. Thus, is required for in vivo function of the radical SAM enzymes biotin synthase and lipoic acid synthase, that are inhibited by 5'-deoxyadenosine accumulation. In Cronobacter sakazakii (strain ATCC BAA-894) (Enterobacter sakazakii), this protein is 5'-methylthioadenosine/S-adenosylhomocysteine nucleosidase.